The sequence spans 433 residues: 26S proteasome regulatory subunit 7 (433 aa).

The interval 1 to 22 (MPDYLGADQRKTKEDEKDDKPI) is disordered. The span at 8–22 (DQRKTKEDEKDDKPI) shows a compositional bias: basic and acidic residues. Position 116 is an N6-acetyllysine (Lys-116). 216 to 223 (GPPGTGKT) is an ATP binding site. Lys-422 carries the post-translational modification N6-acetyllysine.

Belongs to the AAA ATPase family. In terms of assembly, component of the 19S proteasome regulatory particle complex. The 26S proteasome consists of a 20S core particle (CP) and two 19S regulatory subunits (RP). The regulatory particle is made of a lid composed of 9 subunits, a base containing 6 ATPases including PSMC2 and few additional components. Interacts with NDC80/HEC; this interaction is detected only during M phase. Interacts and SQSTM1. Interacts with PAAF1. Directly interacts with TRIM5. In terms of processing, monoubiquitinated by RNF181. Phosphorylated. Dephosphorylated by UBLCP1 which impairs PSMC2 ATPase activity and disrupts 26S proteasome assembly.

It is found in the cytoplasm. Its subcellular location is the nucleus. In terms of biological role, component of the 26S proteasome, a multiprotein complex involved in the ATP-dependent degradation of ubiquitinated proteins. This complex plays a key role in the maintenance of protein homeostasis by removing misfolded or damaged proteins, which could impair cellular functions, and by removing proteins whose functions are no longer required. Therefore, the proteasome participates in numerous cellular processes, including cell cycle progression, apoptosis, or DNA damage repair. PSMC2 belongs to the heterohexameric ring of AAA (ATPases associated with diverse cellular activities) proteins that unfolds ubiquitinated target proteins that are concurrently translocated into a proteolytic chamber and degraded into peptides. The polypeptide is 26S proteasome regulatory subunit 7 (PSMC2) (Pongo abelii (Sumatran orangutan)).